Here is a 300-residue protein sequence, read N- to C-terminus: ESX-5 secretion-associated protein EspG5 (300 aa).

The protein belongs to the EspG family. As to quaternary structure, interacts specifically with ESX-5-dependent PE/PPE proteins. Binds PPE33 and PPE18. Does not interact with EsxN. Monomer in solution.

Its subcellular location is the cytoplasm. Its function is as follows. Specific chaperone for cognate PE/PPE proteins. Plays an important role in preventing aggregation of PE/PPE dimers. Required for LipY and PE31/PPE18 secretion. This chain is ESX-5 secretion-associated protein EspG5, found in Mycobacterium marinum (strain ATCC BAA-535 / M).